Consider the following 496-residue polypeptide: Versicolorin B desaturase stcL (496 aa).

Residues Phe-3–Val-23 form a helical membrane-spanning segment. Cys-440 serves as a coordination point for heme.

The protein belongs to the cytochrome P450 family. It depends on heme as a cofactor.

It is found in the membrane. It catalyses the reaction versicolorin B + NADPH + O2 + H(+) = versicolorin A + NADP(+) + 2 H2O. It participates in mycotoxin biosynthesis; sterigmatocystin biosynthesis. Its function is as follows. Cytochrome P450 monooxygenase; part of the gene cluster that mediates the biosynthesis of sterigmatocystin (ST), a polyketide-derived furanocoumarin which is part of the most toxic and carcinogenic compounds among the known mycotoxins. The first step in the biosynthesis of sterigmatocystin is the production of hexanoate by the fatty acid synthase (FAS) units stcJ and stcK. The polyketide backbone is assembled by the non-reducing polyketide synthase stcA by condensation of the starter hexanoyl-CoA and 7 malonyl-CoA extender units followed by cyclization and release of norsolorinic acid. Norsolorinic acid is the first stable intermediate in the biosynthesis of sterigmatocystin and is converted into averantin (AVN) by the ketoreductase stcE which reduces the hexanoate ketone to an alcohol. Averantin is then oxidized into 5'-hydroxyaverantin (HAVN) by the cytochrome P450 monooxygenase stcF. 5'-hydroxyaverantin is further converted to 5'-oxyaverantin (OAVN) by the 5'-hydroxyaverantin dehydrogenase stcG. The next step is the conversion of OAVN into averufin (AVF) which is catalyzed by a yet to be identified enzyme. The cytochrome P450 monooxygenase stcB and the flavin-binding monooxygenase stcW are both required for the conversion of averufin to 1-hydroxyversicolorone. The esterase stcI probably catalyzes the formation of versiconal hemiacetal acetate from 1-hydroxyversicolorone. The oxydoreductase stcN then probably catalyzes the biosynthetic step from versiconal to versicolorin B (VERB). The next step is performed by the versicolorin B desaturase stcL to produce versicolorin A (VERA). The ketoreductase stcU and the cytochrome P450 monooxygenase stcS are involved in the conversion of versicolorin A to demethylsterigmatocystin. The Baeyer-Villiger oxidas stcQ and the reductase stcR might be involved in the biosynthetic step from versicolorin A to demethylsterigmatocystin. The final step in the biosynthesis of sterigmatocystin is the methylation of demethylsterigmatocystin catalyzed by the methyltransferase stcP. This chain is Versicolorin B desaturase stcL, found in Emericella nidulans (strain FGSC A4 / ATCC 38163 / CBS 112.46 / NRRL 194 / M139) (Aspergillus nidulans).